We begin with the raw amino-acid sequence, 140 residues long: Large-conductance mechanosensitive channel (140 aa).

3 consecutive transmembrane segments (helical) span residues 7–27 (EFAF…GAAF), 30–50 (IITS…FGTV), and 64–84 (GLFV…FLFV).

This sequence belongs to the MscL family. As to quaternary structure, homopentamer.

The protein resides in the cell membrane. In terms of biological role, channel that opens in response to stretch forces in the membrane lipid bilayer. May participate in the regulation of osmotic pressure changes within the cell. This is Large-conductance mechanosensitive channel from Staphylococcus carnosus (strain TM300).